The sequence spans 130 residues: Large ribosomal subunit protein bL17 (130 aa).

This sequence belongs to the bacterial ribosomal protein bL17 family. As to quaternary structure, part of the 50S ribosomal subunit. Contacts protein L32.

This Azotobacter vinelandii (strain DJ / ATCC BAA-1303) protein is Large ribosomal subunit protein bL17.